The sequence spans 161 residues: Regulator of ribonuclease activity A (161 aa).

The protein belongs to the RraA family. Homotrimer. Binds to both RNA-binding sites in the C-terminal region of Rne and to RhlB.

Its subcellular location is the cytoplasm. Globally modulates RNA abundance by binding to RNase E (Rne) and regulating its endonucleolytic activity. Can modulate Rne action in a substrate-dependent manner by altering the composition of the degradosome. Modulates RNA-binding and helicase activities of the degradosome. The sequence is that of Regulator of ribonuclease activity A from Yersinia enterocolitica serotype O:8 / biotype 1B (strain NCTC 13174 / 8081).